The primary structure comprises 447 residues: NADP-specific glutamate dehydrogenase (447 aa).

Substrate-binding residues include Lys-92, Gln-113, and Lys-116. The Proton donor role is filled by Lys-128. Residue Gly-167 participates in substrate binding. NADP(+) is bound by residues Thr-212 and Asn-243. Ser-379 serves as a coordination point for substrate.

Belongs to the Glu/Leu/Phe/Val dehydrogenases family. Homohexamer.

It carries out the reaction L-glutamate + NADP(+) + H2O = 2-oxoglutarate + NH4(+) + NADPH + H(+). In terms of biological role, catalyzes the reversible oxidative deamination of glutamate to alpha-ketoglutarate and ammonia. The protein is NADP-specific glutamate dehydrogenase (gdh) of Corynebacterium glutamicum (strain ATCC 13032 / DSM 20300 / JCM 1318 / BCRC 11384 / CCUG 27702 / LMG 3730 / NBRC 12168 / NCIMB 10025 / NRRL B-2784 / 534).